Here is a 437-residue protein sequence, read N- to C-terminus: Adenylosuccinate synthetase (437 aa).

GTP contacts are provided by residues glycine 12–lysine 18 and glycine 40–threonine 42. Catalysis depends on aspartate 13, which acts as the Proton acceptor. Mg(2+) contacts are provided by aspartate 13 and glycine 40. Residues aspartate 13–lysine 16, asparagine 38–histidine 41, threonine 128, arginine 142, glutamine 223, threonine 238, and arginine 302 each bind IMP. The Proton donor role is filled by histidine 41. Positions glutamine 119–aspartate 138 are disordered. Threonine 298–arginine 304 is a substrate binding site. Residues arginine 304, lysine 330–aspartate 332, and serine 412–glycine 414 each bind GTP.

The protein belongs to the adenylosuccinate synthetase family. As to quaternary structure, homodimer. Requires Mg(2+) as cofactor.

It localises to the cytoplasm. The enzyme catalyses IMP + L-aspartate + GTP = N(6)-(1,2-dicarboxyethyl)-AMP + GDP + phosphate + 2 H(+). Its pathway is purine metabolism; AMP biosynthesis via de novo pathway; AMP from IMP: step 1/2. Its function is as follows. Plays an important role in the de novo pathway of purine nucleotide biosynthesis. Catalyzes the first committed step in the biosynthesis of AMP from IMP. This is Adenylosuccinate synthetase from Synechococcus sp. (strain WH7803).